Reading from the N-terminus, the 1517-residue chain is DNA-directed RNA polymerase subunit beta' (1517 aa).

4 residues coordinate Zn(2+): Cys71, Cys73, Cys86, and Cys89. Asp482, Asp484, and Asp486 together coordinate Mg(2+). Residues Cys812, Cys886, Cys893, and Cys896 each contribute to the Zn(2+) site.

The protein belongs to the RNA polymerase beta' chain family. As to quaternary structure, the RNAP catalytic core consists of 2 alpha, 1 beta, 1 beta' and 1 omega subunit. When a sigma factor is associated with the core the holoenzyme is formed, which can initiate transcription. Requires Mg(2+) as cofactor. It depends on Zn(2+) as a cofactor.

It catalyses the reaction RNA(n) + a ribonucleoside 5'-triphosphate = RNA(n+1) + diphosphate. DNA-dependent RNA polymerase catalyzes the transcription of DNA into RNA using the four ribonucleoside triphosphates as substrates. This Campylobacter lari (strain RM2100 / D67 / ATCC BAA-1060) protein is DNA-directed RNA polymerase subunit beta'.